The following is a 242-amino-acid chain: Segregation and condensation protein A (242 aa).

The protein belongs to the ScpA family. As to quaternary structure, component of a cohesin-like complex composed of ScpA, ScpB and the Smc homodimer, in which ScpA and ScpB bind to the head domain of Smc. The presence of the three proteins is required for the association of the complex with DNA.

The protein resides in the cytoplasm. In terms of biological role, participates in chromosomal partition during cell division. May act via the formation of a condensin-like complex containing Smc and ScpB that pull DNA away from mid-cell into both cell halves. In Lactococcus lactis subsp. cremoris (strain MG1363), this protein is Segregation and condensation protein A.